The sequence spans 155 residues: Mediator of RNA polymerase II transcription subunit 21 (155 aa).

Positions 29–73 (QAPPSVPPGQHRVDTMPEIKGKAASENPQSNPPQPAEPPVPEKIS) are disordered. Residues 39–51 (HRVDTMPEIKGKA) are compositionally biased toward basic and acidic residues. Pro residues predominate over residues 58 to 69 (SNPPQPAEPPVP). Positions 75–147 (EQFNQDLKEF…EVLLKKVEDK (73 aa)) form a coiled coil.

Belongs to the Mediator complex subunit 21 family. Component of the Mediator complex.

The protein localises to the nucleus. In terms of biological role, component of the Mediator complex, a coactivator involved in the regulated transcription of nearly all RNA polymerase II-dependent genes. Mediator functions as a bridge to convey information from gene-specific regulatory proteins to the basal RNA polymerase II transcription machinery. Mediator is recruited to promoters by direct interactions with regulatory proteins and serves as a scaffold for the assembly of a functional preinitiation complex with RNA polymerase II and the general transcription factors. The protein is Mediator of RNA polymerase II transcription subunit 21 (SRB7) of Phaeosphaeria nodorum (strain SN15 / ATCC MYA-4574 / FGSC 10173) (Glume blotch fungus).